The chain runs to 254 residues: Triosephosphate isomerase (254 aa).

10-12 is a substrate binding site; sequence NWK. His-99 (electrophile) is an active-site residue. Catalysis depends on Glu-169, which acts as the Proton acceptor. Substrate is bound by residues Gly-175, Ser-215, and 236-237; that span reads GG.

The protein belongs to the triosephosphate isomerase family. In terms of assembly, homodimer.

Its subcellular location is the cytoplasm. It carries out the reaction D-glyceraldehyde 3-phosphate = dihydroxyacetone phosphate. The protein operates within carbohydrate biosynthesis; gluconeogenesis. It participates in carbohydrate degradation; glycolysis; D-glyceraldehyde 3-phosphate from glycerone phosphate: step 1/1. Its function is as follows. Involved in the gluconeogenesis. Catalyzes stereospecifically the conversion of dihydroxyacetone phosphate (DHAP) to D-glyceraldehyde-3-phosphate (G3P). In Chlamydia felis (strain Fe/C-56) (Chlamydophila felis), this protein is Triosephosphate isomerase.